The primary structure comprises 314 residues: Carbamate kinase (314 aa).

Belongs to the carbamate kinase family.

Its subcellular location is the cytoplasm. It catalyses the reaction hydrogencarbonate + NH4(+) + ATP = carbamoyl phosphate + ADP + H2O + H(+). The protein operates within metabolic intermediate metabolism; carbamoyl phosphate degradation; CO(2) and NH(3) from carbamoyl phosphate: step 1/1. The protein is Carbamate kinase (arcC) of Latilactobacillus sakei (Lactobacillus sakei).